A 543-amino-acid chain; its full sequence is Zinc finger protein 34 (543 aa).

One can recognise a KRAB domain in the interval 14–87; that stretch reads VTFEDVAVFL…DMHGAEQPSV (74 aa). The tract at residues 84–151 is disordered; that stretch reads QPSVDGSAHG…PGEQRGPRLV (68 aa). Basic and acidic residues predominate over residues 124-147; sequence EPGEVHERVREPEGRLDRPGEQRG. 12 C2H2-type zinc fingers span residues 179 to 201, 234 to 256, 262 to 284, 290 to 312, 318 to 340, 346 to 368, 374 to 396, 402 to 424, 430 to 452, 458 to 480, 486 to 508, and 514 to 536; these read HKCD…KRVH, YYCG…QRLH, YKCE…RRMH, YRCD…QRIH, YKCS…QRIH, YKCS…RRTH, YECK…QRIH, YKCN…QRSH, YECN…QRIH, YKCS…QRSH, YKCA…RRIH, and YTCG…QRIH.

The protein belongs to the krueppel C2H2-type zinc-finger protein family.

The protein localises to the nucleus. Functionally, may be involved in transcriptional regulation. This is Zinc finger protein 34 (ZNF34) from Bos taurus (Bovine).